Here is a 117-residue protein sequence, read N- to C-terminus: UPF0102 protein FTN_0424 (117 aa).

The protein belongs to the UPF0102 family.

The chain is UPF0102 protein FTN_0424 from Francisella tularensis subsp. novicida (strain U112).